A 262-amino-acid polypeptide reads, in one-letter code: Probable DNA polymerase sliding clamp 1 (262 aa).

A DNA-binding region spans residues 67 to 86 (KCEHTYELGVNVLNMFKLLR).

It belongs to the PCNA family.

Sliding clamp subunit. Responsible for tethering the catalytic subunit of DNA polymerase to DNA during high-speed replication. The sequence is that of Probable DNA polymerase sliding clamp 1 from Chlorella (PBCV-1).